The sequence spans 115 residues: U17-barytoxin-Tl1b (115 aa).

A signal peptide spans 1-20; that stretch reads MKTIIVFLSLLVLATKFGDA. The propeptide occupies 21–74; sequence KEGVNQKQKKEVTQNEFREEYLNEMAAMSLVQQLEAIERALFENEAGRNSRQKR. Cystine bridges form between cysteine 75–cysteine 89, cysteine 82–cysteine 94, and cysteine 88–cysteine 109.

This sequence belongs to the neurotoxin 14 (magi-1) family. 03 (ICK-30-40) subfamily. In terms of tissue distribution, expressed by the venom gland.

The protein resides in the secreted. Functionally, ion channel inhibitor. The sequence is that of U17-barytoxin-Tl1b from Trittame loki (Brush-footed trapdoor spider).